The primary structure comprises 433 residues: MGQNFSKKSGNDLVSRIVFTILILIVCRFGSFIPIPGIDSIALSSVAAQNQSGILGMFNMLSGGSLGRMSIFALAIMPYITASIIIQLMSVAYKPLENLKKEGEVGKRKVNQLSRYLTVLLASFQAYGVAISLESIVTNTGPVVILAGFFFRITTVITLVVGTMLLMWLGEQITQRGIGNGTSLIIFIGIISGVPSAIISMFELSRKGALSPLIAIAVCIGVVVLIAIIIFFERAQRKLLVQYPKRQVGNKIYGGEATHMPLKLNTSGVIPPIFASSILLFPATLANFSNSNSETMGMLTYYLGHGKPVYILLYVALIMFFSFFYTAIVFNSEETANNLRKYGAYIPGKRPGKNTSDYFDYILTRLTVIGGIYLSVICVIPELLMNKYVISLSLGGTSFLIVVNVVLDTMTQIQTYLFSSKYEGLMKKVKLKN.

A run of 10 helical transmembrane segments spans residues 17-37 (IVFT…PIPG), 71-91 (IFAL…LMSV), 117-137 (LTVL…ESIV), 141-161 (GPVV…TLVV), 184-204 (LIIF…MFEL), 212-232 (PLIA…IIFF), 268-288 (GVIP…LANF), 310-330 (YILL…AIVF), 366-386 (LTVI…LLMN), and 388-408 (YVIS…VVLD).

Belongs to the SecY/SEC61-alpha family. In terms of assembly, component of the Sec protein translocase complex. Heterotrimer consisting of SecY, SecE and SecG subunits. The heterotrimers can form oligomers, although 1 heterotrimer is thought to be able to translocate proteins. Interacts with the ribosome. Interacts with SecDF, and other proteins may be involved. Interacts with SecA.

Its subcellular location is the cell inner membrane. Its function is as follows. The central subunit of the protein translocation channel SecYEG. Consists of two halves formed by TMs 1-5 and 6-10. These two domains form a lateral gate at the front which open onto the bilayer between TMs 2 and 7, and are clamped together by SecE at the back. The channel is closed by both a pore ring composed of hydrophobic SecY resides and a short helix (helix 2A) on the extracellular side of the membrane which forms a plug. The plug probably moves laterally to allow the channel to open. The ring and the pore may move independently. This is Protein translocase subunit SecY from Rickettsia conorii (strain ATCC VR-613 / Malish 7).